The chain runs to 386 residues: Chaperone protein DnaJ (386 aa).

A J domain is found at 5–70 (DYYEVLGVER…QKRAAYDRYG (66 aa)). Residues 138–216 (GKDETIHVPQ…CGGHGQVKEE (79 aa)) form a CR-type zinc finger. Cysteine 151, cysteine 154, cysteine 168, cysteine 171, cysteine 190, cysteine 193, cysteine 204, and cysteine 207 together coordinate Zn(2+). CXXCXGXG motif repeat units follow at residues 151 to 158 (CRPCEGTG), 168 to 175 (CETCGGHG), 190 to 197 (CHICQGRG), and 204 to 211 (CKTCGGHG).

It belongs to the DnaJ family. As to quaternary structure, homodimer. Zn(2+) serves as cofactor.

It localises to the cytoplasm. In terms of biological role, participates actively in the response to hyperosmotic and heat shock by preventing the aggregation of stress-denatured proteins and by disaggregating proteins, also in an autonomous, DnaK-independent fashion. Unfolded proteins bind initially to DnaJ; upon interaction with the DnaJ-bound protein, DnaK hydrolyzes its bound ATP, resulting in the formation of a stable complex. GrpE releases ADP from DnaK; ATP binding to DnaK triggers the release of the substrate protein, thus completing the reaction cycle. Several rounds of ATP-dependent interactions between DnaJ, DnaK and GrpE are required for fully efficient folding. Also involved, together with DnaK and GrpE, in the DNA replication of plasmids through activation of initiation proteins. The chain is Chaperone protein DnaJ from Hyphomonas neptunium (strain ATCC 15444).